The primary structure comprises 504 residues: Histidine ammonia-lyase (504 aa).

A cross-link (5-imidazolinone (Ala-Gly)) is located at residues 142-144; it reads ASG. Serine 143 is subject to 2,3-didehydroalanine (Ser).

The protein belongs to the PAL/histidase family. Contains an active site 4-methylidene-imidazol-5-one (MIO), which is formed autocatalytically by cyclization and dehydration of residues Ala-Ser-Gly.

Its subcellular location is the cytoplasm. It catalyses the reaction L-histidine = trans-urocanate + NH4(+). The protein operates within amino-acid degradation; L-histidine degradation into L-glutamate; N-formimidoyl-L-glutamate from L-histidine: step 1/3. This chain is Histidine ammonia-lyase, found in Staphylococcus aureus (strain bovine RF122 / ET3-1).